Reading from the N-terminus, the 188-residue chain is ATP synthase subunit delta (188 aa).

The protein belongs to the ATPase delta chain family. In terms of assembly, F-type ATPases have 2 components, F(1) - the catalytic core - and F(0) - the membrane proton channel. F(1) has five subunits: alpha(3), beta(3), gamma(1), delta(1), epsilon(1). F(0) has three main subunits: a(1), b(2) and c(10-14). The alpha and beta chains form an alternating ring which encloses part of the gamma chain. F(1) is attached to F(0) by a central stalk formed by the gamma and epsilon chains, while a peripheral stalk is formed by the delta and b chains.

It is found in the cell inner membrane. In terms of biological role, f(1)F(0) ATP synthase produces ATP from ADP in the presence of a proton or sodium gradient. F-type ATPases consist of two structural domains, F(1) containing the extramembraneous catalytic core and F(0) containing the membrane proton channel, linked together by a central stalk and a peripheral stalk. During catalysis, ATP synthesis in the catalytic domain of F(1) is coupled via a rotary mechanism of the central stalk subunits to proton translocation. Its function is as follows. This protein is part of the stalk that links CF(0) to CF(1). It either transmits conformational changes from CF(0) to CF(1) or is implicated in proton conduction. This Rhizobium etli (strain CIAT 652) protein is ATP synthase subunit delta.